A 321-amino-acid polypeptide reads, in one-letter code: Ribonucleoside-diphosphate reductase small subunit (321 aa).

Residues Asp78, Glu108, and His111 each coordinate Fe cation. The active site involves Tyr115. The helical transmembrane segment at 165-185 (ILMILIEGLFFASSFASIAYL) threads the bilayer. Residues Glu171, Glu205, and His208 each coordinate Fe cation.

It belongs to the ribonucleoside diphosphate reductase small chain family. As to quaternary structure, heterotetramer composed of a homodimer of the large subunit (R1) and a homodimer of the small subunit (R2). Larger multisubunit protein complex are also active, composed of (R1)n(R2)n. It depends on Fe cation as a cofactor.

Its subcellular location is the host membrane. It catalyses the reaction a 2'-deoxyribonucleoside 5'-diphosphate + [thioredoxin]-disulfide + H2O = a ribonucleoside 5'-diphosphate + [thioredoxin]-dithiol. Its function is as follows. Ribonucleoside-diphosphate reductase holoenzyme provides the precursors necessary for viral DNA synthesis. Allows virus growth in non-dividing cells, as well as reactivation from latency in infected hosts. Catalyzes the biosynthesis of deoxyribonucleotides from the corresponding ribonucleotides. In Equus caballus (Horse), this protein is Ribonucleoside-diphosphate reductase small subunit.